The primary structure comprises 303 residues: E3 ubiquitin-protein ligase SINA-like 3 (303 aa).

The segment at M1 to A30 is disordered. The segment at C49–S85 adopts an RING-type zinc-finger fold. The segment at I99–E286 is SBD. The SIAH-type zinc finger occupies A102–K162. Zn(2+) is bound by residues C107, C114, H128, C132, C139, C144, H156, and H161.

Belongs to the SINA (Seven in absentia) family.

It catalyses the reaction S-ubiquitinyl-[E2 ubiquitin-conjugating enzyme]-L-cysteine + [acceptor protein]-L-lysine = [E2 ubiquitin-conjugating enzyme]-L-cysteine + N(6)-ubiquitinyl-[acceptor protein]-L-lysine.. The protein operates within protein modification; protein ubiquitination. E3 ubiquitin-protein ligase that mediates ubiquitination and subsequent proteasomal degradation of target proteins. E3 ubiquitin ligases accept ubiquitin from an E2 ubiquitin-conjugating enzyme in the form of a thioester and then directly transfers the ubiquitin to targeted substrates. It probably triggers the ubiquitin-mediated degradation of different substrates. The protein is E3 ubiquitin-protein ligase SINA-like 3 of Arabidopsis thaliana (Mouse-ear cress).